A 244-amino-acid chain; its full sequence is tRNA (guanine-N(1)-)-methyltransferase (244 aa).

Residues Gly-114 and 134–139 (IGDYVL) each bind S-adenosyl-L-methionine. Residues 220–244 (RRPDLLEKAGASPGKSGSNFGKHDA) are disordered.

This sequence belongs to the RNA methyltransferase TrmD family. In terms of assembly, homodimer.

The protein resides in the cytoplasm. It carries out the reaction guanosine(37) in tRNA + S-adenosyl-L-methionine = N(1)-methylguanosine(37) in tRNA + S-adenosyl-L-homocysteine + H(+). Functionally, specifically methylates guanosine-37 in various tRNAs. This is tRNA (guanine-N(1)-)-methyltransferase from Rhizobium johnstonii (strain DSM 114642 / LMG 32736 / 3841) (Rhizobium leguminosarum bv. viciae).